Here is a 276-residue protein sequence, read N- to C-terminus: Secreted RxLR effector protein 150 (276 aa).

The signal sequence occupies residues 1-18 (MRNIAFLIGLFFIGYSSC). The RxLR-dEER signature appears at 49 to 64 (RTLQADDRERILAEER).

It belongs to the RxLR effector family.

The protein localises to the secreted. The protein resides in the host nucleus. It localises to the host cytoplasm. Secreted effector that partially suppresses the host cell death induced by cell death-inducing proteins. This chain is Secreted RxLR effector protein 150, found in Plasmopara viticola (Downy mildew of grapevine).